Reading from the N-terminus, the 318-residue chain is Pyrimidine-specific ribonucleoside hydrolase RihA (318 aa).

His240 is an active-site residue.

It belongs to the IUNH family. RihA subfamily.

Hydrolyzes cytidine or uridine to ribose and cytosine or uracil, respectively. The polypeptide is Pyrimidine-specific ribonucleoside hydrolase RihA (Shewanella sp. (strain ANA-3)).